A 165-amino-acid chain; its full sequence is Histone H1-like protein HC2 (165 aa).

Basic residues-rich tracts occupy residues 1–50 and 59–80; these read MLGV…KTVA and PVAK…KKTV. The segment at 1 to 80 is disordered; the sequence is MLGVQKKRST…VRKVAAKKTV (80 aa).

This sequence belongs to the histone H1/H5 family. HCT subfamily.

Its function is as follows. Might have a role in establishing the nucleoid structure of elementary bodies. The chain is Histone H1-like protein HC2 (hctB) from Chlamydia trachomatis.